The sequence spans 160 residues: tRNA (cytidine(56)-2'-O)-methyltransferase (160 aa).

S-adenosyl-L-methionine-binding positions include leucine 68, 94-98 (GAEKV), and 112-119 (IGNQPHSE).

The protein belongs to the aTrm56 family. As to quaternary structure, homodimer.

It localises to the cytoplasm. It carries out the reaction cytidine(56) in tRNA + S-adenosyl-L-methionine = 2'-O-methylcytidine(56) in tRNA + S-adenosyl-L-homocysteine + H(+). In terms of biological role, specifically catalyzes the AdoMet-dependent 2'-O-ribose methylation of cytidine at position 56 in tRNAs. The chain is tRNA (cytidine(56)-2'-O)-methyltransferase from Saccharolobus solfataricus (strain ATCC 35092 / DSM 1617 / JCM 11322 / P2) (Sulfolobus solfataricus).